The sequence spans 367 residues: MKSLVLLLCLAQLWGCHSAPHGPGLIYRQPNCDDPETEEAALVAIDYINQNLPWGYKHTLNQIDEVKVWPQQPSGELFEIEIDTLETTCHVLDPTPVARCSVRQLKEHAVEGDCDFQLLKLDGKFSVVYAKCDSSPDSAEDVRKVCQDCPLLAPLNDTRVVHAAKAALAAFNAQNNGSNFQLEEISRAQLVPLPPSTYVEFTVSGTDCVAKEATEAAKCNLLAEKQYGFCKATLSEKLGGAEVAVTCMVFQTQPVSSQPQPEGANEAVPTPVVDPDAPPSPPLGAPGLPPAGSPPDSHVLLAAPPGHQLHRAHYDLRHTFMGVVSLGSPSGEVSHPRKTRTVVQPSVGAAAGPVVPPCPGRIRHFKV.

A signal peptide spans Met-1–Ser-18. A Cystatin fetuin-A-type 1 domain is found at Tyr-27–Asp-133. 6 disulfides stabilise this stretch: Cys-32/Cys-358, Cys-89/Cys-100, Cys-114/Cys-132, Cys-146/Cys-149, Cys-208/Cys-219, and Cys-230/Cys-247. Phosphoserine is present on Ser-134. 2 positions are modified to phosphoserine; by FAM20C: Ser-135 and Ser-138. The region spanning Lys-144–Val-255 is the Cystatin fetuin-A-type 2 domain. 2 N-linked (GlcNAc...) (complex) asparagine glycosylation sites follow: Asn-156 and Asn-176. The disordered stretch occupies residues Val-255–His-298. Thr-270 carries O-linked (GalNAc...) threonine glycosylation. Residues Asp-276–Ser-293 are compositionally biased toward pro residues. Residues Ser-280 and Ser-293 are each glycosylated (O-linked (GalNAc...) serine). A propeptide spans Leu-301–Arg-340 (connecting peptide). Phosphothreonine; by FAM20C is present on Thr-319. Phosphoserine; by FAM20C occurs at positions 325, 328, and 330. Residues Thr-339 and Thr-341 are each glycosylated (O-linked (GalNAc...) threonine). Ser-346 carries an O-linked (GalNAc...) serine glycan.

It belongs to the fetuin family. Alpha-2-HS glycoprotein derives from this precursor, when the connecting peptide is cleaved off. The two chains A and B are held together by a single disulfide bond. Post-translationally, phosphorylated by FAM20C in the extracellular medium. O- and N-glycosylated. O-glycosylated with core 1 or possibly core 8 glycans. N-glycan at Asn-156: Hex5HexNAc4; N-glycan heterogeneity at Asn-176: Hex5HexNAc4 (major) and Hex6HexNAc5 (minor). Synthesized in liver and selectively concentrated in bone matrix. Secreted in plasma. It is also found in dentin in much higher quantities than other plasma proteins.

The protein localises to the secreted. Its function is as follows. Promotes endocytosis, possesses opsonic properties and influences the mineral phase of bone. Shows affinity for calcium and barium ions. This chain is Alpha-2-HS-glycoprotein (AHSG), found in Homo sapiens (Human).